The sequence spans 210 residues: Ribosomal RNA large subunit methyltransferase E (210 aa).

Positions 61, 63, 81, 97, and 122 each coordinate S-adenosyl-L-methionine. The active-site Proton acceptor is the Lys-162.

It belongs to the class I-like SAM-binding methyltransferase superfamily. RNA methyltransferase RlmE family.

It is found in the cytoplasm. It carries out the reaction uridine(2552) in 23S rRNA + S-adenosyl-L-methionine = 2'-O-methyluridine(2552) in 23S rRNA + S-adenosyl-L-homocysteine + H(+). Specifically methylates the uridine in position 2552 of 23S rRNA at the 2'-O position of the ribose in the fully assembled 50S ribosomal subunit. The sequence is that of Ribosomal RNA large subunit methyltransferase E from Xanthomonas oryzae pv. oryzae (strain MAFF 311018).